The following is a 136-amino-acid chain: Glutamyl-tRNA(Gln) amidotransferase subunit C, mitochondrial (136 aa).

It belongs to the GatC family. In terms of assembly, subunit of the heterotrimeric GatCAB amidotransferase (AdT) complex, composed of A (QRSL1), B (GATB) and C (GATC) subunits.

It is found in the mitochondrion. It catalyses the reaction L-glutamyl-tRNA(Gln) + L-glutamine + ATP + H2O = L-glutaminyl-tRNA(Gln) + L-glutamate + ADP + phosphate + H(+). Functionally, allows the formation of correctly charged Gln-tRNA(Gln) through the transamidation of misacylated Glu-tRNA(Gln) in the mitochondria. The reaction takes place in the presence of glutamine and ATP through an activated gamma-phospho-Glu-tRNA(Gln). The protein is Glutamyl-tRNA(Gln) amidotransferase subunit C, mitochondrial of Homo sapiens (Human).